A 463-amino-acid chain; its full sequence is Cysteine--tRNA ligase (463 aa).

Position 29 (Cys29) interacts with Zn(2+). The 'HIGH' region motif lies at 31–41 (PTVYDFAHIGN). Zn(2+)-binding residues include Cys227, His252, and Glu256. The short motif at 285–289 (KMSKS) is the 'KMSKS' region element. Lys288 serves as a coordination point for ATP.

Belongs to the class-I aminoacyl-tRNA synthetase family. In terms of assembly, monomer. It depends on Zn(2+) as a cofactor.

The protein localises to the cytoplasm. It carries out the reaction tRNA(Cys) + L-cysteine + ATP = L-cysteinyl-tRNA(Cys) + AMP + diphosphate. This Rhodopseudomonas palustris (strain BisA53) protein is Cysteine--tRNA ligase.